The following is a 757-amino-acid chain: 5-methyltetrahydropteroyltriglutamate--homocysteine methyltransferase (757 aa).

Residues Lys18 and Asn116 each coordinate 5-methyltetrahydropteroyltri-L-glutamate. Position 437–439 (437–439 (IGS)) interacts with L-homocysteine. L-methionine contacts are provided by residues 437–439 (IGS) and Glu490. 5-methyltetrahydropteroyltri-L-glutamate-binding positions include 521 to 522 (RC) and Trp567. Residue Asp605 participates in L-homocysteine binding. Asp605 contributes to the L-methionine binding site. Residues His647, Cys649, His658, Asp662, and Glu671 each coordinate Zn(2+). The active-site Proton donor is His701. Cys733 is a Zn(2+) binding site.

It belongs to the vitamin-B12 independent methionine synthase family. Zn(2+) is required as a cofactor. As to expression, expressed in pollen (at protein level).

The enzyme catalyses 5-methyltetrahydropteroyltri-L-glutamate + L-homocysteine = tetrahydropteroyltri-L-glutamate + L-methionine. It participates in amino-acid biosynthesis; L-methionine biosynthesis via de novo pathway; L-methionine from L-homocysteine (MetE route): step 1/1. Its function is as follows. Catalyzes the transfer of a methyl group from 5-methyltetrahydrofolate to homocysteine resulting in methionine formation. The chain is 5-methyltetrahydropteroyltriglutamate--homocysteine methyltransferase from Kali turgidum (Prickly saltwort).